We begin with the raw amino-acid sequence, 465 residues long: ATP-dependent rRNA helicase rrp3 (465 aa).

Residues 1–22 are compositionally biased toward basic and acidic residues; it reads MAPSEKKLTEDKKNSSLNKKIE. The disordered stretch occupies residues 1–44; the sequence is MAPSEKKLTEDKKNSSLNKKIETSNSSSEKSSENNNGDSQNNEA. The span at 23–36 shows a compositional bias: low complexity; it reads TSNSSSEKSSENNN. The Q motif signature appears at 46-74; that stretch reads KTFKELGVIDELCEACEKLGFKTPTPIQQ. Residues 77-248 enclose the Helicase ATP-binding domain; that stretch reads IPVVLNKRDV…RASLHQPVRV (172 aa). 90 to 97 serves as a coordination point for ATP; that stretch reads AQTGSGKT. Positions 196-199 match the DEAD box motif; the sequence is DEAD. In terms of domain architecture, Helicase C-terminal spans 275 to 419; the sequence is YLVYLVNELA…EYEIDKEGVF (145 aa). Basic residues predominate over residues 442–453; it reads RRKSKGKLHTKR. The tract at residues 442-465 is disordered; that stretch reads RRKSKGKLHTKRKRDDLDREEQIY. Residues 454-465 show a composition bias toward basic and acidic residues; it reads KRDDLDREEQIY.

The protein belongs to the DEAD box helicase family. DDX47/RRP3 subfamily. As to quaternary structure, interacts with the SSU processome.

The protein resides in the nucleus. The catalysed reaction is ATP + H2O = ADP + phosphate + H(+). Functionally, ATP-dependent rRNA helicase required for pre-ribosomal RNA processing. Involved in the maturation of the 35S-pre-rRNA and to its cleavage to mature 18S rRNA. The protein is ATP-dependent rRNA helicase rrp3 of Schizosaccharomyces pombe (strain 972 / ATCC 24843) (Fission yeast).